Reading from the N-terminus, the 177-residue chain is Adenine phosphoribosyltransferase (177 aa).

Belongs to the purine/pyrimidine phosphoribosyltransferase family. As to quaternary structure, homodimer.

Its subcellular location is the cytoplasm. The catalysed reaction is AMP + diphosphate = 5-phospho-alpha-D-ribose 1-diphosphate + adenine. It functions in the pathway purine metabolism; AMP biosynthesis via salvage pathway; AMP from adenine: step 1/1. Functionally, catalyzes a salvage reaction resulting in the formation of AMP, that is energically less costly than de novo synthesis. The chain is Adenine phosphoribosyltransferase from Chlorobaculum tepidum (strain ATCC 49652 / DSM 12025 / NBRC 103806 / TLS) (Chlorobium tepidum).